The primary structure comprises 317 residues: tRNA-cytidine(32) 2-sulfurtransferase (317 aa).

The PP-loop motif signature appears at 63–68 (SGGKDS). 3 residues coordinate [4Fe-4S] cluster: Cys-138, Cys-141, and Cys-229.

The protein belongs to the TtcA family. As to quaternary structure, homodimer. It depends on Mg(2+) as a cofactor. [4Fe-4S] cluster is required as a cofactor.

The protein resides in the cytoplasm. It carries out the reaction cytidine(32) in tRNA + S-sulfanyl-L-cysteinyl-[cysteine desulfurase] + AH2 + ATP = 2-thiocytidine(32) in tRNA + L-cysteinyl-[cysteine desulfurase] + A + AMP + diphosphate + H(+). Its pathway is tRNA modification. In terms of biological role, catalyzes the ATP-dependent 2-thiolation of cytidine in position 32 of tRNA, to form 2-thiocytidine (s(2)C32). The sulfur atoms are provided by the cysteine/cysteine desulfurase (IscS) system. The sequence is that of tRNA-cytidine(32) 2-sulfurtransferase from Janthinobacterium sp. (strain Marseille) (Minibacterium massiliensis).